The sequence spans 223 residues: Endonuclease NucS (223 aa).

The protein belongs to the NucS endonuclease family.

The protein localises to the cytoplasm. Cleaves both 3' and 5' ssDNA extremities of branched DNA structures. This chain is Endonuclease NucS, found in Streptomyces griseus subsp. griseus (strain JCM 4626 / CBS 651.72 / NBRC 13350 / KCC S-0626 / ISP 5235).